Reading from the N-terminus, the 799-residue chain is Protein translocase subunit SecA (799 aa).

Residues Gln85, Gly103–Thr107, and Asp504 each bind ATP.

This sequence belongs to the SecA family. Monomer and homodimer. Part of the essential Sec protein translocation apparatus which comprises SecA, SecYEG and auxiliary proteins SecDF. Other proteins may also be involved.

The protein localises to the cell membrane. It localises to the cytoplasm. The enzyme catalyses ATP + H2O + cellular proteinSide 1 = ADP + phosphate + cellular proteinSide 2.. In terms of biological role, part of the Sec protein translocase complex. Interacts with the SecYEG preprotein conducting channel. Has a central role in coupling the hydrolysis of ATP to the transfer of proteins into and across the cell membrane, serving as an ATP-driven molecular motor driving the stepwise translocation of polypeptide chains across the membrane. This chain is Protein translocase subunit SecA, found in Lactobacillus acidophilus (strain ATCC 700396 / NCK56 / N2 / NCFM).